We begin with the raw amino-acid sequence, 510 residues long: Beta-glucosidase 12 (510 aa).

The first 24 residues, 1–24, serve as a signal peptide directing secretion; the sequence is MAAAGAMPGGLLLTFLLLAVVASG. An a beta-D-glucoside-binding site is contributed by Gln-53. N-linked (GlcNAc...) asparagine glycosylation is present at Asn-122. A beta-D-glucoside-binding positions include His-157 and 202–203; that span reads NE. The active-site Proton donor is Glu-203. Intrachain disulfides connect Cys-208–Cys-243 and Cys-222–Cys-230. Asn-229 is a glycosylation site (N-linked (GlcNAc...) asparagine). Tyr-346 contributes to the a beta-D-glucoside binding site. N-linked (GlcNAc...) asparagine glycosylation is found at Asn-361 and Asn-371. A beta-D-glucoside is bound at residue Glu-417. Glu-417 serves as the catalytic Nucleophile. N-linked (GlcNAc...) asparagine glycosylation is present at Asn-425. Residues Trp-466, 473 to 474, and Phe-482 each bind a beta-D-glucoside; that span reads EW.

The protein belongs to the glycosyl hydrolase 1 family.

The protein localises to the secreted. The enzyme catalyses Hydrolysis of terminal, non-reducing beta-D-glucosyl residues with release of beta-D-glucose.. Hydrolyzes p-nitrophenyl beta-D-glucoside, p-nitrophenyl beta-D-galactoside, p-nitrophenyl beta-D-xyloside, p-nitrophenyl beta-D-fucoside, p-nitrophenyl beta-L-arabinoside, cello-oligosaccharides and laminaribiose. This chain is Beta-glucosidase 12, found in Oryza sativa subsp. japonica (Rice).